The primary structure comprises 257 residues: tRNA-cytidine(32) 2-sulfurtransferase (257 aa).

Residues 37-42 (SGGKDS) carry the PP-loop motif motif. Residues Cys112, Cys115, and Cys202 each coordinate [4Fe-4S] cluster.

It belongs to the TtcA family. Homodimer. Mg(2+) serves as cofactor. The cofactor is [4Fe-4S] cluster.

Its subcellular location is the cytoplasm. The catalysed reaction is cytidine(32) in tRNA + S-sulfanyl-L-cysteinyl-[cysteine desulfurase] + AH2 + ATP = 2-thiocytidine(32) in tRNA + L-cysteinyl-[cysteine desulfurase] + A + AMP + diphosphate + H(+). The protein operates within tRNA modification. Its function is as follows. Catalyzes the ATP-dependent 2-thiolation of cytidine in position 32 of tRNA, to form 2-thiocytidine (s(2)C32). The sulfur atoms are provided by the cysteine/cysteine desulfurase (IscS) system. This chain is tRNA-cytidine(32) 2-sulfurtransferase, found in Geobacter sulfurreducens (strain ATCC 51573 / DSM 12127 / PCA).